The chain runs to 1092 residues: NAD-specific glutamate dehydrogenase (1092 aa).

Residue Lys-626 is part of the active site.

This sequence belongs to the Glu/Leu/Phe/Val dehydrogenases family. As to quaternary structure, homotetramer. Interacts with NNK1. Post-translationally, phosphorylated by a complex containing the NNK1 kinase.

The enzyme catalyses L-glutamate + NAD(+) + H2O = 2-oxoglutarate + NH4(+) + NADH + H(+). Functionally, NAD(+)-dependent glutamate dehydrogenase which degrades glutamate to ammonia and alpha-ketoglutarate. This chain is NAD-specific glutamate dehydrogenase (GDH2), found in Saccharomyces cerevisiae (strain ATCC 204508 / S288c) (Baker's yeast).